Consider the following 474-residue polypeptide: Siroheme synthase (474 aa).

A precorrin-2 dehydrogenase /sirohydrochlorin ferrochelatase region spans residues 1–203 (MKLFPLFADL…QRPEEAERLL (203 aa)). Residues 22 to 23 (EI) and 43 to 44 (PA) each bind NAD(+). A Phosphoserine modification is found at S128. Residues 216-474 (GSVVLVGAGP…QRPAPAALAA (259 aa)) are uroporphyrinogen-III C-methyltransferase. P225 contributes to the S-adenosyl-L-methionine binding site. D248 acts as the Proton acceptor in catalysis. Catalysis depends on K270, which acts as the Proton donor. Residues 302–304 (GGD), I307, 332–333 (TA), M384, and G413 contribute to the S-adenosyl-L-methionine site.

In the N-terminal section; belongs to the precorrin-2 dehydrogenase / sirohydrochlorin ferrochelatase family. The protein in the C-terminal section; belongs to the precorrin methyltransferase family.

The enzyme catalyses uroporphyrinogen III + 2 S-adenosyl-L-methionine = precorrin-2 + 2 S-adenosyl-L-homocysteine + H(+). It catalyses the reaction precorrin-2 + NAD(+) = sirohydrochlorin + NADH + 2 H(+). It carries out the reaction siroheme + 2 H(+) = sirohydrochlorin + Fe(2+). The protein operates within cofactor biosynthesis; adenosylcobalamin biosynthesis; precorrin-2 from uroporphyrinogen III: step 1/1. It participates in cofactor biosynthesis; adenosylcobalamin biosynthesis; sirohydrochlorin from precorrin-2: step 1/1. Its pathway is porphyrin-containing compound metabolism; siroheme biosynthesis; precorrin-2 from uroporphyrinogen III: step 1/1. It functions in the pathway porphyrin-containing compound metabolism; siroheme biosynthesis; siroheme from sirohydrochlorin: step 1/1. The protein operates within porphyrin-containing compound metabolism; siroheme biosynthesis; sirohydrochlorin from precorrin-2: step 1/1. Functionally, multifunctional enzyme that catalyzes the SAM-dependent methylations of uroporphyrinogen III at position C-2 and C-7 to form precorrin-2 via precorrin-1. Then it catalyzes the NAD-dependent ring dehydrogenation of precorrin-2 to yield sirohydrochlorin. Finally, it catalyzes the ferrochelation of sirohydrochlorin to yield siroheme. This Bordetella petrii (strain ATCC BAA-461 / DSM 12804 / CCUG 43448) protein is Siroheme synthase.